The chain runs to 464 residues: Fumarate hydratase class II (464 aa).

Residues 100 to 102 (SGT), 131 to 134 (HPND), 141 to 143 (SSN), and threonine 189 contribute to the substrate site. Catalysis depends on histidine 190, which acts as the Proton donor/acceptor. Serine 320 is an active-site residue. Residues serine 321 and 326–328 (KVN) each bind substrate.

Belongs to the class-II fumarase/aspartase family. Fumarase subfamily. In terms of assembly, homotetramer.

The protein localises to the cytoplasm. The enzyme catalyses (S)-malate = fumarate + H2O. It functions in the pathway carbohydrate metabolism; tricarboxylic acid cycle; (S)-malate from fumarate: step 1/1. Functionally, involved in the TCA cycle. Catalyzes the stereospecific interconversion of fumarate to L-malate. The protein is Fumarate hydratase class II of Deinococcus radiodurans (strain ATCC 13939 / DSM 20539 / JCM 16871 / CCUG 27074 / LMG 4051 / NBRC 15346 / NCIMB 9279 / VKM B-1422 / R1).